Reading from the N-terminus, the 277-residue chain is Bifunctional protein FolD (277 aa).

NADP(+) contacts are provided by residues 164 to 166 (GRS), S189, and T230.

Belongs to the tetrahydrofolate dehydrogenase/cyclohydrolase family. In terms of assembly, homodimer.

It carries out the reaction (6R)-5,10-methylene-5,6,7,8-tetrahydrofolate + NADP(+) = (6R)-5,10-methenyltetrahydrofolate + NADPH. It catalyses the reaction (6R)-5,10-methenyltetrahydrofolate + H2O = (6R)-10-formyltetrahydrofolate + H(+). It functions in the pathway one-carbon metabolism; tetrahydrofolate interconversion. In terms of biological role, catalyzes the oxidation of 5,10-methylenetetrahydrofolate to 5,10-methenyltetrahydrofolate and then the hydrolysis of 5,10-methenyltetrahydrofolate to 10-formyltetrahydrofolate. In Clostridium perfringens (strain ATCC 13124 / DSM 756 / JCM 1290 / NCIMB 6125 / NCTC 8237 / Type A), this protein is Bifunctional protein FolD.